Consider the following 482-residue polypeptide: Early growth response protein 4 (482 aa).

The interval 274–357 (DLGEGAESLP…PPAKARRKGR (84 aa)) is disordered. The span at 280-290 (ESLPGLLTPPS) shows a compositional bias: low complexity. Over residues 291–302 (GEGGSSGEGGEF) the composition is skewed to gly residues. The span at 337 to 349 (PEPPVPPPAPFPP) shows a compositional bias: pro residues. 3 consecutive C2H2-type zinc fingers follow at residues 376–400 (FACP…LRIH), 406–428 (FQCR…VRTH), and 434–456 (FACD…SKVH).

The protein belongs to the EGR C2H2-type zinc-finger protein family. As to expression, expressed in brain. In the cerebellum and frontal cortex.

The protein resides in the nucleus. Transcriptional regulator. Recognizes and binds to the DNA sequence 5'-GCGGGGGCG-3' (GSG). Activates the transcription of target genes whose products are required for mitogenesis and differentiation. The polypeptide is Early growth response protein 4 (EGR4) (Bos taurus (Bovine)).